Consider the following 233-residue polypeptide: Transcriptional regulatory protein NatR (233 aa).

The region spanning Lys3–Leu117 is the Response regulatory domain. Asp54 carries the 4-aspartylphosphate modification. An HTH LytTR-type domain is found at Ile129–Phe233.

Phosphorylated by NatK.

It is found in the cytoplasm. Its function is as follows. Member of the two-component regulatory system NatK/NatR that positively regulates the expression of the natAB operon. Acts by binding directly to the promoter of natAB. The chain is Transcriptional regulatory protein NatR from Bacillus subtilis (strain 168).